A 176-amino-acid polypeptide reads, in one-letter code: Pro-glucagon (176 aa).

Positions 1 to 20 (MKSLYFVAGLLVMLAQGSWQ) are cleaved as a signal peptide. Residues 25–35 (NTEEKSSSFPA) show a composition bias toward polar residues. Residues 25-59 (NTEEKSSSFPAPQTDPLGDPDQISEDKRHSQGTFT) form a disordered region. Residue serine 54 is modified to Phosphoserine. Residues 84-89 (NKNNIA) constitute a propeptide that is removed on maturation. Phosphoserine is present on residues serine 105 and serine 108. An Arginine amide modification is found at arginine 127. A propeptide spanning residues 131–145 (DFPEEVNIVEELRRR) is cleaved from the precursor. 2 positions are modified to phosphoserine: serine 150 and serine 152.

It belongs to the glucagon family. In terms of processing, proglucagon is post-translationally processed in a tissue-specific manner in pancreatic A cells and intestinal L cells. In pancreatic A cells, the major bioactive hormone is glucagon cleaved by PCSK2/PC2. In the intestinal L cells PCSK1/PC1 liberates GLP-1, GLP-2, glicentin and oxyntomodulin. GLP-1 is further N-terminally truncated by post-translational processing in the intestinal L cells resulting in GLP-1(7-37) GLP-1-(7-36)amide. The C-terminal amidation is neither important for the metabolism of GLP-1 nor for its effects on the endocrine pancreas. In terms of tissue distribution, glucagon is secreted in the A cells of the islets of Langerhans. GLP-1, GLP-2, oxyntomodulin and glicentin are secreted from enteroendocrine cells throughout the gastrointestinal tract. GLP-1 and GLP-2 are also secreted in selected neurons in the brain.

It localises to the secreted. Functionally, plays a key role in glucose metabolism and homeostasis. Regulates blood glucose by increasing gluconeogenesis and decreasing glycolysis. A counterregulatory hormone of insulin, raises plasma glucose levels in response to insulin-induced hypoglycemia. Plays an important role in initiating and maintaining hyperglycemic conditions in diabetes. Its function is as follows. Potent stimulator of glucose-dependent insulin release. Also stimulates insulin release in response to IL6. Plays important roles on gastric motility and the suppression of plasma glucagon levels. May be involved in the suppression of satiety and stimulation of glucose disposal in peripheral tissues, independent of the actions of insulin. Has growth-promoting activities on intestinal epithelium. May also regulate the hypothalamic pituitary axis (HPA) via effects on LH, TSH, CRH, oxytocin, and vasopressin secretion. Increases islet mass through stimulation of islet neogenesis and pancreatic beta cell proliferation. Inhibits beta cell apoptosis. In terms of biological role, stimulates intestinal growth and up-regulates villus height in the small intestine, concomitant with increased crypt cell proliferation and decreased enterocyte apoptosis. The gastrointestinal tract, from the stomach to the colon is the principal target for GLP-2 action. Plays a key role in nutrient homeostasis, enhancing nutrient assimilation through enhanced gastrointestinal function, as well as increasing nutrient disposal. Stimulates intestinal glucose transport and decreases mucosal permeability. Significantly reduces food intake. Inhibits gastric emptying in humans. Suppression of gastric emptying may lead to increased gastric distension, which may contribute to satiety by causing a sensation of fullness. Functionally, may modulate gastric acid secretion and the gastro-pyloro-duodenal activity. May play an important role in intestinal mucosal growth in the early period of life. This chain is Pro-glucagon (GCG), found in Ovis aries (Sheep).